An 885-amino-acid polypeptide reads, in one-letter code: Alanine--tRNA ligase (885 aa).

Zn(2+)-binding residues include His563, His567, Cys677, and His681. The disordered stretch occupies residues 848 to 868 (LGGKGGGGRPDRAQGGAPSLA).

It belongs to the class-II aminoacyl-tRNA synthetase family. Zn(2+) serves as cofactor.

It is found in the cytoplasm. It catalyses the reaction tRNA(Ala) + L-alanine + ATP = L-alanyl-tRNA(Ala) + AMP + diphosphate. Catalyzes the attachment of alanine to tRNA(Ala) in a two-step reaction: alanine is first activated by ATP to form Ala-AMP and then transferred to the acceptor end of tRNA(Ala). Also edits incorrectly charged Ser-tRNA(Ala) and Gly-tRNA(Ala) via its editing domain. This chain is Alanine--tRNA ligase, found in Paracoccus denitrificans (strain Pd 1222).